Consider the following 256-residue polypeptide: Thiazole synthase (256 aa).

The active-site Schiff-base intermediate with DXP is the lysine 95. 1-deoxy-D-xylulose 5-phosphate is bound by residues glycine 156, 182–183 (AG), and 204–205 (NT).

The protein belongs to the ThiG family. In terms of assembly, homotetramer. Forms heterodimers with either ThiH or ThiS.

It localises to the cytoplasm. The catalysed reaction is [ThiS sulfur-carrier protein]-C-terminal-Gly-aminoethanethioate + 2-iminoacetate + 1-deoxy-D-xylulose 5-phosphate = [ThiS sulfur-carrier protein]-C-terminal Gly-Gly + 2-[(2R,5Z)-2-carboxy-4-methylthiazol-5(2H)-ylidene]ethyl phosphate + 2 H2O + H(+). Its pathway is cofactor biosynthesis; thiamine diphosphate biosynthesis. Its function is as follows. Catalyzes the rearrangement of 1-deoxy-D-xylulose 5-phosphate (DXP) to produce the thiazole phosphate moiety of thiamine. Sulfur is provided by the thiocarboxylate moiety of the carrier protein ThiS. In vitro, sulfur can be provided by H(2)S. In Salmonella paratyphi A (strain ATCC 9150 / SARB42), this protein is Thiazole synthase.